The following is a 239-amino-acid chain: Zwei Ig domain protein zig-7 (239 aa).

The first 21 residues, 1–21 (MKLINCISIALLCTLVDFSSA), serve as a signal peptide directing secretion. N-linked (GlcNAc...) asparagine glycosylation is present at N43. The Ig-like C2-type domain occupies 145 to 211 (PHVIGAERRG…TEDHIGKYRC (67 aa)). Cysteines 164 and 211 form a disulfide.

Expressed in body wall muscles.

It localises to the secreted. Its function is as follows. Probably not involved in maintaining the position of ASI and ASH head neuron cell bodies and ventral nerve cord axons of PVQ, PVP, RMEV, AVK and HSN neurons. The sequence is that of Zwei Ig domain protein zig-7 from Caenorhabditis elegans.